The sequence spans 686 residues: Hexamerin 70c (686 aa).

Residues 1 to 19 form the signal peptide; the sequence is MLSKVVLLVALAAICGAQG. The region spanning 32 to 155 is the Hemocyanin N-terminal domain; the sequence is FLHKQKKIFD…IAVLYRPDTK (124 aa). Positions 161–431 constitute a Hemocyanin middle domain; sequence AIYEIYPNYF…MLYQNILSYF (271 aa). Residues asparagine 205 and asparagine 662 are each glycosylated (N-linked (GlcNAc...) asparagine). Positions 440-676 constitute a Hemocyanin C-terminal domain; it reads QYSQSELQMP…NMYFKDVFIY (237 aa).

This sequence belongs to the hemocyanin/hexamerin family. In terms of assembly, probable homohexamer. Expressed in the fat body and secreted into the hemolymph (at protein level). Present in trophocytes and oenocytes of the fat body (at protein level). Not expressed in ovary or testis.

It localises to the secreted. It is found in the nucleus. Its subcellular location is the cytoplasm. The protein resides in the cytoplasmic granule. Functionally, storage protein that may function as a nutrient supply to compensate for lack of dietary proteins during metamorphosis and egg production. The polypeptide is Hexamerin 70c (Apis mellifera (Honeybee)).